A 593-amino-acid chain; its full sequence is MEQPEDMASLSEFDSLAGSIPATKVEITVSCRNLLDKDMFSKSDPLCVMYTQGMENKQWREFGRTEVIDNTLNPDFVRKFIVDYFFEEKQNLRFDLYDVDSKSPDLSKHDFLGQAFCTLGEIVGSPGSRLEKPLTIGAFSLNSRTGKPMPAVSNGGVPGKKCGTIILSAEELSNCRDVATMQFCANKLDKKDFFGKSDPFLVFYRSNEDGTFTICHKTEVMKNTLNPVWQTFSIPVRALCNGDYDRTIKVEVYDWDRDGSHDFIGEFTTSYRELARGQSQFNIYEVVNPKKKMKKKKYVNSGTVTLLSFAVESECTFLDYIKGGTQINFTVAIDFTASNGNPSQSTSLHYMSPYQLNAYALALTAVGEIIQHYDSDKMFPALGFGAKLPPDGRVSHEFPLNGNQENPSCCGIDGILEAYHRSLRTVQLYGPTNFAPVVTHVARNAAAVQDGSQYSVLLIITDGVISDMAQTKEAIVNAAKLPMSIIIVGVGQAEFDAMVELDGDDVRISSRGKLAERDIVQFVPFRDYVDRTGNHVLSMARLARDVLAEIPDQLVSYMKAQGIRPRPPPAAPTHSPSQSPARTPPASPLHTHI.

Positions 2-134 constitute a C2 1 domain; it reads EQPEDMASLS…SPGSRLEKPL (133 aa). Position 19 is a phosphoserine (S19). Ca(2+) contacts are provided by D38, D44, D98, D100, S103, K108, and D110. Residue S103 is modified to Phosphoserine. The residue at position 140 (S140) is a Phosphoserine. Positions 161–284 constitute a C2 2 domain; that stretch reads KCGTIILSAE…ARGQSQFNIY (124 aa). Positions 192, 198, 254, 256, and 262 each coordinate Ca(2+). The VWFA domain occupies 328-554; sequence NFTVAIDFTA…DVLAEIPDQL (227 aa). Residues 562–593 form a disordered region; sequence GIRPRPPPAAPTHSPSQSPARTPPASPLHTHI. The segment covering 572–581 has biased composition (low complexity); that stretch reads PTHSPSQSPA.

This sequence belongs to the copine family. Ca(2+) serves as cofactor. As to expression, expressed in the brain, heart, stomach, spleen, lymph node and testis. Expressed in melanocytes.

The protein resides in the perikaryon. Its subcellular location is the cell projection. Its function is as follows. Probable calcium-dependent phospholipid-binding protein that may play a role in calcium-mediated intracellular processes. Plays a role in dendrite formation by melanocytes. In Homo sapiens (Human), this protein is Copine-5.